Reading from the N-terminus, the 155-residue chain is Endoribonuclease YbeY (155 aa).

Histidine 114, histidine 118, and histidine 124 together coordinate Zn(2+).

It belongs to the endoribonuclease YbeY family. Zn(2+) serves as cofactor.

The protein localises to the cytoplasm. Functionally, single strand-specific metallo-endoribonuclease involved in late-stage 70S ribosome quality control and in maturation of the 3' terminus of the 16S rRNA. The sequence is that of Endoribonuclease YbeY from Escherichia coli O81 (strain ED1a).